The sequence spans 570 residues: Urease subunit alpha (570 aa).

A Urease domain is found at 131–570; it reads GGFDAHIHFI…LPMAQRYFLF (440 aa). Ni(2+) contacts are provided by His136, His138, and Lys219. Lys219 carries the N6-carboxylysine modification. His221 lines the substrate pocket. Residues His248 and His274 each contribute to the Ni(2+) site. The active-site Proton donor is the His322. Asp362 serves as a coordination point for Ni(2+).

It belongs to the metallo-dependent hydrolases superfamily. Urease alpha subunit family. Heterotrimer of UreA (gamma), UreB (beta) and UreC (alpha) subunits. Three heterotrimers associate to form the active enzyme. It depends on Ni cation as a cofactor. In terms of processing, carboxylation allows a single lysine to coordinate two nickel ions.

The protein resides in the cytoplasm. It catalyses the reaction urea + 2 H2O + H(+) = hydrogencarbonate + 2 NH4(+). It functions in the pathway nitrogen metabolism; urea degradation; CO(2) and NH(3) from urea (urease route): step 1/1. In Chelativorans sp. (strain BNC1), this protein is Urease subunit alpha.